The sequence spans 387 residues: Succinate--CoA ligase [ADP-forming] subunit beta (387 aa).

Residues Lys46, 53–55 (GRG), Glu99, Ala102, and Glu107 each bind ATP. Asn199 and Asp213 together coordinate Mg(2+). Residues Asn264 and 321–323 (GIV) contribute to the substrate site.

The protein belongs to the succinate/malate CoA ligase beta subunit family. In terms of assembly, heterotetramer of two alpha and two beta subunits. The cofactor is Mg(2+).

It catalyses the reaction succinate + ATP + CoA = succinyl-CoA + ADP + phosphate. The enzyme catalyses GTP + succinate + CoA = succinyl-CoA + GDP + phosphate. The protein operates within carbohydrate metabolism; tricarboxylic acid cycle; succinate from succinyl-CoA (ligase route): step 1/1. In terms of biological role, succinyl-CoA synthetase functions in the citric acid cycle (TCA), coupling the hydrolysis of succinyl-CoA to the synthesis of either ATP or GTP and thus represents the only step of substrate-level phosphorylation in the TCA. The beta subunit provides nucleotide specificity of the enzyme and binds the substrate succinate, while the binding sites for coenzyme A and phosphate are found in the alpha subunit. This is Succinate--CoA ligase [ADP-forming] subunit beta from Campylobacter jejuni subsp. doylei (strain ATCC BAA-1458 / RM4099 / 269.97).